A 131-amino-acid chain; its full sequence is Small ribosomal subunit protein uS8 (131 aa).

The protein belongs to the universal ribosomal protein uS8 family. Part of the 30S ribosomal subunit. Contacts proteins S5 and S12.

In terms of biological role, one of the primary rRNA binding proteins, it binds directly to 16S rRNA central domain where it helps coordinate assembly of the platform of the 30S subunit. This is Small ribosomal subunit protein uS8 from Nitrosomonas eutropha (strain DSM 101675 / C91 / Nm57).